Reading from the N-terminus, the 429-residue chain is Phosphomethylpyrimidine synthase (429 aa).

Substrate is bound by residues asparagine 66, methionine 94, tyrosine 123, histidine 162, 184-186 (SRG), 225-228 (DALR), and glutamate 264. Position 268 (histidine 268) interacts with Zn(2+). Position 291 (tyrosine 291) interacts with substrate. A Zn(2+)-binding site is contributed by histidine 332. Cysteine 408, cysteine 411, and cysteine 415 together coordinate [4Fe-4S] cluster.

Belongs to the ThiC family. [4Fe-4S] cluster serves as cofactor.

It carries out the reaction 5-amino-1-(5-phospho-beta-D-ribosyl)imidazole + S-adenosyl-L-methionine = 4-amino-2-methyl-5-(phosphooxymethyl)pyrimidine + CO + 5'-deoxyadenosine + formate + L-methionine + 3 H(+). It participates in cofactor biosynthesis; thiamine diphosphate biosynthesis. In terms of biological role, catalyzes the synthesis of the hydroxymethylpyrimidine phosphate (HMP-P) moiety of thiamine from aminoimidazole ribotide (AIR) in a radical S-adenosyl-L-methionine (SAM)-dependent reaction. This is Phosphomethylpyrimidine synthase from Sulfurisphaera tokodaii (strain DSM 16993 / JCM 10545 / NBRC 100140 / 7) (Sulfolobus tokodaii).